The following is a 188-amino-acid chain: Elongation factor P (188 aa).

It belongs to the elongation factor P family.

The protein localises to the cytoplasm. The protein operates within protein biosynthesis; polypeptide chain elongation. Its function is as follows. Involved in peptide bond synthesis. Stimulates efficient translation and peptide-bond synthesis on native or reconstituted 70S ribosomes in vitro. Probably functions indirectly by altering the affinity of the ribosome for aminoacyl-tRNA, thus increasing their reactivity as acceptors for peptidyl transferase. This is Elongation factor P from Sulfurovum sp. (strain NBC37-1).